The sequence spans 371 residues: Glycerol-3-phosphate dehydrogenase [NAD(+)] 2 (371 aa).

Residues 18-23, phenylalanine 50, and phenylalanine 106 each bind NAD(+); that span reads GSGNWG. Residue lysine 129 participates in substrate binding. Alanine 162 contributes to the NAD(+) binding site. Lysine 222 functions as the Proton acceptor in the catalytic mechanism. NAD(+) is bound by residues arginine 294 and glutamine 323. 294–295 contacts substrate; that stretch reads RN.

It belongs to the NAD-dependent glycerol-3-phosphate dehydrogenase family. As to quaternary structure, interacts with human CFH/complement factor H; the interaction is direct and enables the pathogen to evade the host innate immune system. Interacts with human CFHR1/complement factor H-related protein 1; the interaction is direct. Interacts with human PLG/plasminogen; the interaction is direct and provides active plasmin on the surface of fungal cells.

The protein resides in the secreted. It is found in the cell wall. It localises to the cytoplasm. The protein localises to the peroxisome. The catalysed reaction is sn-glycerol 3-phosphate + NAD(+) = dihydroxyacetone phosphate + NADH + H(+). In terms of biological role, may catalyze the production and accumulation of glycerol during hyperosmotic stress conditions. Glycerol acts as a osmoregulator that prevents loss of water and turgor of the cells. Mediates evasion of the host innate immune system by binding inhibitory components of the host alternative complement system, in a manner dependent on estrogen-induced inhibition of EBP1. This is Glycerol-3-phosphate dehydrogenase [NAD(+)] 2 from Candida albicans (strain SC5314 / ATCC MYA-2876) (Yeast).